The primary structure comprises 87 residues: U18-myrmicitoxin-Mri1a (87 aa).

The N-terminal stretch at Met-1 to Pro-32 is a signal peptide. In terms of domain architecture, EGF-like spans Asn-33–Gln-77. Disulfide bonds link Cys-37–Cys-52, Cys-46–Cys-65, and Cys-67–Cys-76.

O-glycosylated. As to expression, expressed by the venom gland.

The protein localises to the secreted. In Manica rubida (European giant red ant), this protein is U18-myrmicitoxin-Mri1a.